Consider the following 226-residue polypeptide: High affinity heme transporter (226 aa).

A signal peptide spans 1–20 (MISLKIYFVLIFLFLKGINS). A heme binding region spans residues 72 to 101 (CDTTILSETNNVTGSCYVANCANDTVLEIC). Residue S199 is the site of GPI-anchor amidated serine attachment. Residues 200–226 (SASSTIFKPSYFISCLLSVGLYLVLNF) constitute a propeptide, removed in mature form.

The protein localises to the cell membrane. The protein resides in the vacuole membrane. Functionally, high affinity heme transporter involved in the assimilation of exogenous heme during conditions of low cellular iron. This chain is High affinity heme transporter, found in Schizosaccharomyces pombe (strain 972 / ATCC 24843) (Fission yeast).